The following is a 576-amino-acid chain: Arginine--tRNA ligase (576 aa).

The 'HIGH' region motif lies at proline 122–histidine 132.

The protein belongs to the class-I aminoacyl-tRNA synthetase family. In terms of assembly, monomer.

It is found in the cytoplasm. The catalysed reaction is tRNA(Arg) + L-arginine + ATP = L-arginyl-tRNA(Arg) + AMP + diphosphate. The chain is Arginine--tRNA ligase from Photobacterium profundum (strain SS9).